The primary structure comprises 353 residues: Aromatic amino acid aminotransferase (353 aa).

Lysine 217 carries the post-translational modification N6-(pyridoxal phosphate)lysine.

The protein belongs to the class-II pyridoxal-phosphate-dependent aminotransferase family. In terms of assembly, homodimer. It depends on pyridoxal 5'-phosphate as a cofactor.

The catalysed reaction is an aromatic L-alpha-amino acid + 2-oxoglutarate = an aromatic oxo-acid + L-glutamate. Its function is as follows. Aminotransferase that catalyzes the conversion of aromatic amino acids and 2-oxoglutarate into corresponding aromatic oxo acids and L-glutamate. This chain is Aromatic amino acid aminotransferase, found in Mycobacterium bovis (strain ATCC BAA-935 / AF2122/97).